Here is a 237-residue protein sequence, read N- to C-terminus: NAD-dependent protein deacylase (237 aa).

Residues 1-235 (MRVVVLSGAG…PGLLQRLPAL (235 aa)) enclose the Deacetylase sirtuin-type domain. Position 8–28 (8–28 (GAGISAESDVPTFRDDKNGLW)) interacts with NAD(+). Substrate is bound by residues Tyr-53 and Arg-56. Position 86–89 (86–89 (QNVD)) interacts with NAD(+). Catalysis depends on His-104, which acts as the Proton acceptor. Residues Cys-112, Cys-115, Cys-138, and Cys-140 each coordinate Zn(2+). NAD(+) contacts are provided by residues 177–179 (GTS), 203–205 (NPE), and Ala-221.

The protein belongs to the sirtuin family. Class III subfamily. Zn(2+) serves as cofactor.

Its subcellular location is the cytoplasm. The catalysed reaction is N(6)-acetyl-L-lysyl-[protein] + NAD(+) + H2O = 2''-O-acetyl-ADP-D-ribose + nicotinamide + L-lysyl-[protein]. The enzyme catalyses N(6)-succinyl-L-lysyl-[protein] + NAD(+) + H2O = 2''-O-succinyl-ADP-D-ribose + nicotinamide + L-lysyl-[protein]. Functionally, NAD-dependent lysine deacetylase and desuccinylase that specifically removes acetyl and succinyl groups on target proteins. Modulates the activities of several proteins which are inactive in their acylated form. The protein is NAD-dependent protein deacylase of Mycobacterium leprae (strain TN).